We begin with the raw amino-acid sequence, 318 residues long: L-carnitine dehydrogenase (318 aa).

14 to 19 (GSGVIG) serves as a coordination point for NAD(+).

It belongs to the 3-hydroxyacyl-CoA dehydrogenase family. L-carnitine dehydrogenase subfamily. Homodimer.

Its subcellular location is the cytoplasm. It carries out the reaction carnitine + NAD(+) = 3-dehydrocarnitine + NADH + H(+). Its pathway is amine and polyamine metabolism; carnitine metabolism. Its function is as follows. Catalyzes the NAD(+)-dependent oxidation of L-carnitine to 3-dehydrocarnitine. In Pseudomonas syringae pv. syringae (strain B728a), this protein is L-carnitine dehydrogenase.